Here is a 107-residue protein sequence, read N- to C-terminus: Putative protein RFPL3S (107 aa).

Strongly expressed in the testis and weakly in brain, placenta and pancreas.

The sequence is that of Putative protein RFPL3S (RFPL3S) from Homo sapiens (Human).